The chain runs to 81 residues: ATP synthase subunit c (81 aa).

Helical transmembrane passes span Ala6–Ile26 and Leu57–Ala77.

The protein belongs to the ATPase C chain family. F-type ATPases have 2 components, F(1) - the catalytic core - and F(0) - the membrane proton channel. F(1) has five subunits: alpha(3), beta(3), gamma(1), delta(1), epsilon(1). F(0) has four main subunits: a(1), b(1), b'(1) and c(10-14). The alpha and beta chains form an alternating ring which encloses part of the gamma chain. F(1) is attached to F(0) by a central stalk formed by the gamma and epsilon chains, while a peripheral stalk is formed by the delta, b and b' chains.

It is found in the cellular thylakoid membrane. In terms of biological role, f(1)F(0) ATP synthase produces ATP from ADP in the presence of a proton or sodium gradient. F-type ATPases consist of two structural domains, F(1) containing the extramembraneous catalytic core and F(0) containing the membrane proton channel, linked together by a central stalk and a peripheral stalk. During catalysis, ATP synthesis in the catalytic domain of F(1) is coupled via a rotary mechanism of the central stalk subunits to proton translocation. Key component of the F(0) channel; it plays a direct role in translocation across the membrane. A homomeric c-ring of between 10-14 subunits forms the central stalk rotor element with the F(1) delta and epsilon subunits. The polypeptide is ATP synthase subunit c (Synechocystis sp. (strain ATCC 27184 / PCC 6803 / Kazusa)).